A 511-amino-acid chain; its full sequence is Zinc finger and BTB domain-containing protein 45 (511 aa).

The 64-residue stretch at 33–96 folds into the BTB domain; the sequence is CDVTVRIREA…LYSGSLVVAQ (64 aa). Residues 159 to 168 are compositionally biased toward low complexity; it reads ARPPGHPGAA. 2 disordered regions span residues 159–241 and 294–403; these read ARPP…PDCA and EDGA…PPTY. The span at 206–224 shows a compositional bias: acidic residues; it reads RGDEDDEESDDETDGEDGE. Residues 339 to 360 are compositionally biased toward pro residues; the sequence is PGPPAPPPSAPSGPAPAPPPAF. Residues 378–397 show a composition bias toward low complexity; it reads PAPSAAPTTAPSGTPARTPG. 4 C2H2-type zinc fingers span residues 403–425, 431–453, 459–481, and 486–508; these read YECSHCRKTFSSRKNYTKHMFIH, HQCAVCWRSFSLRDYLLKHMVTH, FQCAVCAKRFTQKSSLNVHMRTH, and APCPACGKVFSHRALLERHLAAH.

The protein belongs to the krueppel C2H2-type zinc-finger protein family.

The protein resides in the nucleus. Its function is as follows. May be involved in transcriptional regulation. In the central nervous system, may play a role in glial cell differentiation. The sequence is that of Zinc finger and BTB domain-containing protein 45 (ZBTB45) from Homo sapiens (Human).